Here is a 500-residue protein sequence, read N- to C-terminus: NAD(P)H-quinone oxidoreductase chain 4, chloroplastic (500 aa).

14 helical membrane passes run 4-24 (FPWLTIIVVLPIFAGSLIFFL), 35-55 (YTICICMLELLLTTYAFCYHF), 87-107 (LGPVLLTGFITTLATLAAWPV), 113-130 (LFHFLMLAMYSGQIGSFS), 134-154 (LLLFFIMWELELIPVYLLLSM), 167-187 (FILYTAGGSIFLLMGVLGVGL), 207-227 (VALEIIFYIGFLIAFAVKLPI), 242-262 (HYSTCMLLAGILLKMGAYGLI), 272-292 (AHSIFSPWLMVVGTIQIIYAA), 305-325 (IAYSSVSHMGFILIGIASITD), 330-350 (GAILQIISHGFIGAALFFLAG), 386-406 (LALPGMSGFVAEVLVFLGIIT), 416-436 (IAITFVMAIGMILTPIYLLSM), and 462-482 (LFVSISIFIPVIGIGMYPDFV).

This sequence belongs to the complex I subunit 4 family.

The protein localises to the plastid. It is found in the chloroplast thylakoid membrane. The enzyme catalyses a plastoquinone + NADH + (n+1) H(+)(in) = a plastoquinol + NAD(+) + n H(+)(out). The catalysed reaction is a plastoquinone + NADPH + (n+1) H(+)(in) = a plastoquinol + NADP(+) + n H(+)(out). The sequence is that of NAD(P)H-quinone oxidoreductase chain 4, chloroplastic from Helianthus annuus (Common sunflower).